The chain runs to 130 residues: Small ribosomal subunit protein uS8 (130 aa).

It belongs to the universal ribosomal protein uS8 family.

In Candida glabrata (strain ATCC 2001 / BCRC 20586 / JCM 3761 / NBRC 0622 / NRRL Y-65 / CBS 138) (Yeast), this protein is Small ribosomal subunit protein uS8 (RPS22).